A 188-amino-acid polypeptide reads, in one-letter code: Elongation factor P (188 aa).

Belongs to the elongation factor P family.

It is found in the cytoplasm. The protein operates within protein biosynthesis; polypeptide chain elongation. Involved in peptide bond synthesis. Stimulates efficient translation and peptide-bond synthesis on native or reconstituted 70S ribosomes in vitro. Probably functions indirectly by altering the affinity of the ribosome for aminoacyl-tRNA, thus increasing their reactivity as acceptors for peptidyl transferase. This Rickettsia rickettsii (strain Iowa) protein is Elongation factor P.